A 173-amino-acid polypeptide reads, in one-letter code: Calcium-binding protein 5 (173 aa).

4 EF-hand domains span residues 28–63 (DEIEELREAFLEFDKDRDGFISCKDLGNLMRTMGYM), 82–99 (GRVDFDDFVELMTPKLLA), 105–140 (IGVQEMRDAFKEFDTNGDGEITLVELQQAMQRLLGE), and 142–173 (LTPREISEVVREADVNGDGTVDFEEFVKMMSR). Ca(2+) contacts are provided by aspartate 41, aspartate 43, aspartate 45, and aspartate 52. Ca(2+) is bound by residues aspartate 118, asparagine 120, aspartate 122, glutamate 124, glutamate 129, aspartate 155, asparagine 157, aspartate 159, threonine 161, and glutamate 166.

Interacts with CACNA1C (via C-terminal CDB motif) in a calcium-dependent manner. Interacts with STXBP1. Interacts with MYO6. As to expression, retina.

It is found in the cytoplasm. Functionally, inhibits calcium-dependent inactivation of L-type calcium channel and shifts voltage dependence of activation to more depolarized membrane potentials. Involved in the transmission of light signals. May positively regulate neurotransmitter vesicle endocytosis and exocytosis in a salt-dependent manner. May play a role in the extension and network organization of neurites. The chain is Calcium-binding protein 5 (CABP5) from Homo sapiens (Human).